The primary structure comprises 429 residues: UDP-N-acetylglucosamine 1-carboxyvinyltransferase (429 aa).

Residue 22-23 (KN) participates in phosphoenolpyruvate binding. R102 is a binding site for UDP-N-acetyl-alpha-D-glucosamine. Catalysis depends on C126, which acts as the Proton donor. C126 carries the post-translational modification 2-(S-cysteinyl)pyruvic acid O-phosphothioketal. UDP-N-acetyl-alpha-D-glucosamine contacts are provided by residues 131–135 (RPVDL), D316, and I338.

Belongs to the EPSP synthase family. MurA subfamily.

Its subcellular location is the cytoplasm. The catalysed reaction is phosphoenolpyruvate + UDP-N-acetyl-alpha-D-glucosamine = UDP-N-acetyl-3-O-(1-carboxyvinyl)-alpha-D-glucosamine + phosphate. It functions in the pathway cell wall biogenesis; peptidoglycan biosynthesis. Cell wall formation. Adds enolpyruvyl to UDP-N-acetylglucosamine. This is UDP-N-acetylglucosamine 1-carboxyvinyltransferase from Methylobacterium radiotolerans (strain ATCC 27329 / DSM 1819 / JCM 2831 / NBRC 15690 / NCIMB 10815 / 0-1).